We begin with the raw amino-acid sequence, 398 residues long: Basic helix-loop-helix neural transcription factor TAP (398 aa).

Disordered stretches follow at residues 35-59 (ETEAQLSSRRRLDFGTPPTPAIPQP) and 102-144 (RATN…RSRS). Over residues 127 to 141 (RPKRKYAVGKNRVTR) the composition is skewed to basic residues. The region spanning 154–206 (FRRMKANDRERNRMHNLNDALEKLRVTLPSLPEETKLTKIEILRFAHNYIFAL) is the bHLH domain. 2 disordered regions span residues 265–333 (AQHQ…QQFS) and 361–398 (QQSSFYSQTPPWKDYPEDQAHVHPVPHQHSYKNFAPQV). Positions 307 to 333 (HQQQQQPHQPHHLQPNPQQESSPQQFS) are enriched in low complexity. Polar residues predominate over residues 361–370 (QQSSFYSQTP).

As to expression, expressed in neuronal and glial precursors during differentiation. In the peripheral nervous system, expression is exclusively in one of the neurons that innervate each larval chemosensory organ. Expressed at a late stage in the development of one type of adult chemosensory organ, the gustatory bristles of the leg, wing and proboscis. Expressed very early in the development of a second type of chemosensory receptors, the olfactory organs of the antenna.

The protein localises to the nucleus. In terms of biological role, may play a role in the specification of the sugar-sensitive adult gustatory neuron and affect the response to sugar and salt. Regulated by POXN. This Drosophila melanogaster (Fruit fly) protein is Basic helix-loop-helix neural transcription factor TAP (tap).